Reading from the N-terminus, the 247-residue chain is 5-oxoprolinase subunit A (247 aa).

This sequence belongs to the LamB/PxpA family. Forms a complex composed of PxpA, PxpB and PxpC.

It catalyses the reaction 5-oxo-L-proline + ATP + 2 H2O = L-glutamate + ADP + phosphate + H(+). In terms of biological role, catalyzes the cleavage of 5-oxoproline to form L-glutamate coupled to the hydrolysis of ATP to ADP and inorganic phosphate. The polypeptide is 5-oxoprolinase subunit A (Vibrio vulnificus (strain CMCP6)).